Reading from the N-terminus, the 1016-residue chain is DNA polymerase I (1016 aa).

The 5'-3' exonuclease domain maps to Met1–Val308. Positions Gly334–Pro361 are disordered. In terms of domain architecture, 3'-5' exonuclease spans Ser394 to Arg630. The polymerase stretch occupies residues Gly768–His1016.

Belongs to the DNA polymerase type-A family. Single-chain monomer with multiple functions.

The enzyme catalyses DNA(n) + a 2'-deoxyribonucleoside 5'-triphosphate = DNA(n+1) + diphosphate. In terms of biological role, in addition to polymerase activity, this DNA polymerase exhibits 3'-5' and 5'-3' exonuclease activity. This Rhizobium leguminosarum protein is DNA polymerase I (polA).